A 266-amino-acid polypeptide reads, in one-letter code: Dihydropteroate synthase (266 aa).

The Pterin-binding domain occupies 12-260; sequence AAIMGILNVT…DVKANQDIVA (249 aa). Mg(2+) is bound at residue asparagine 19. Residues threonine 59, aspartate 93, asparagine 112, aspartate 176, lysine 212, and 248–250 contribute to the (7,8-dihydropterin-6-yl)methyl diphosphate site; that span reads RVH.

Belongs to the DHPS family. As to quaternary structure, homodimer or homotrimer. Mg(2+) is required as a cofactor.

The enzyme catalyses (7,8-dihydropterin-6-yl)methyl diphosphate + 4-aminobenzoate = 7,8-dihydropteroate + diphosphate. Its pathway is cofactor biosynthesis; tetrahydrofolate biosynthesis; 7,8-dihydrofolate from 2-amino-4-hydroxy-6-hydroxymethyl-7,8-dihydropteridine diphosphate and 4-aminobenzoate: step 1/2. Catalyzes the condensation of para-aminobenzoate (pABA) with 6-hydroxymethyl-7,8-dihydropterin diphosphate (DHPt-PP) to form 7,8-dihydropteroate (H2Pte), the immediate precursor of folate derivatives. The chain is Dihydropteroate synthase (folP) from Streptococcus pyogenes serotype M1.